The sequence spans 84 residues: LEEGEITSKVKFPPSSSPSFPRLVMVGTLPDLQEITLCYWFKVNQLKGTLGHSRVLBMFSYATAKKDNELLTFLDEQGDFLFNV.

A Pentraxin (PTX) domain is found at 6-84; sequence ITSKVKFPPS…DEQGDFLFNV (79 aa). Positions 67 and 68 each coordinate Ca(2+).

The protein belongs to the pentraxin family. In terms of assembly, homopentamer. Pentraxin (or pentaxin) have a discoid arrangement of 5 non-covalently bound subunits. It depends on Ca(2+) as a cofactor. A disulfide bond links Cys-38 to a Cys in the C-terminal half of the chain of 163 residues.

Functionally, lectin that binds sialic acid. Displays antiviral activity and therefore may contribute to defense against infections. The chain is Limulin from Limulus polyphemus (Atlantic horseshoe crab).